A 322-amino-acid chain; its full sequence is UDP-N-acetylenolpyruvoylglucosamine reductase (322 aa).

Residues 36–202 (RAGGPAQVLF…TSVLFEGVPG (167 aa)) enclose the FAD-binding PCMH-type domain. Residue Arg-182 is part of the active site. Residue Ser-231 is the Proton donor of the active site. Glu-301 is a catalytic residue.

Belongs to the MurB family. It depends on FAD as a cofactor.

It localises to the cytoplasm. It carries out the reaction UDP-N-acetyl-alpha-D-muramate + NADP(+) = UDP-N-acetyl-3-O-(1-carboxyvinyl)-alpha-D-glucosamine + NADPH + H(+). The protein operates within cell wall biogenesis; peptidoglycan biosynthesis. In terms of biological role, cell wall formation. The polypeptide is UDP-N-acetylenolpyruvoylglucosamine reductase (Brucella suis (strain ATCC 23445 / NCTC 10510)).